The following is a 281-amino-acid chain: Lipoyl synthase (281 aa).

[4Fe-4S] cluster-binding residues include Cys37, Cys42, Cys48, Cys63, Cys67, Cys70, and Ser274. One can recognise a Radical SAM core domain in the interval Trp49 to Lys263.

The protein belongs to the radical SAM superfamily. Lipoyl synthase family. [4Fe-4S] cluster serves as cofactor.

The protein localises to the cytoplasm. The enzyme catalyses [[Fe-S] cluster scaffold protein carrying a second [4Fe-4S](2+) cluster] + N(6)-octanoyl-L-lysyl-[protein] + 2 oxidized [2Fe-2S]-[ferredoxin] + 2 S-adenosyl-L-methionine + 4 H(+) = [[Fe-S] cluster scaffold protein] + N(6)-[(R)-dihydrolipoyl]-L-lysyl-[protein] + 4 Fe(3+) + 2 hydrogen sulfide + 2 5'-deoxyadenosine + 2 L-methionine + 2 reduced [2Fe-2S]-[ferredoxin]. Its pathway is protein modification; protein lipoylation via endogenous pathway; protein N(6)-(lipoyl)lysine from octanoyl-[acyl-carrier-protein]: step 2/2. Catalyzes the radical-mediated insertion of two sulfur atoms into the C-6 and C-8 positions of the octanoyl moiety bound to the lipoyl domains of lipoate-dependent enzymes, thereby converting the octanoylated domains into lipoylated derivatives. In Parabacteroides distasonis (strain ATCC 8503 / DSM 20701 / CIP 104284 / JCM 5825 / NCTC 11152), this protein is Lipoyl synthase.